The primary structure comprises 576 residues: MAGUK p55 subfamily member 2 (576 aa).

L27 domains lie at 8–60 and 84–142; these read SETA…FMQQ and LEAV…YETP. Ser-42 carries the phosphoserine modification. Phosphothreonine is present on Thr-141. Ser-145 carries the phosphoserine modification. Residues 185–240 form the PDZ domain; the sequence is ELVIARILHGGMVAQQGLLHVGDIIKEVNGQPVGSDPRALQELLRNASGSVILKIL. Residues 249–317 enclose the SH3 domain; that stretch reads PRQVFVKCHF…PSQLLEEKRK (69 aa). Residues 374–561 form the Guanylate kinase-like domain; it reads RKTLVLIGAQ…TFRELQTAME (188 aa).

This sequence belongs to the MAGUK family. Can homomultimerise. Interacts with CACNG2. Interacts (via the SH3-Guanylate kinase-like sub-module) with DLG4/PSD95 and DLGAP1/GKAP. Interacts (via the PDZ domain) with CADM1 (via C-terminus). Interacts with KCNN2/SK2 (via N-terminal domain). Interacts with SRC. Phosphorylated by SRC.

The protein resides in the cytoplasm. Its subcellular location is the cytoskeleton. It localises to the membrane. The protein localises to the cell projection. It is found in the dendrite. The protein resides in the postsynaptic density. In terms of biological role, postsynaptic MAGUK scaffold protein that links CADM1 cell adhesion molecules to core components of the postsynaptic density. In CA1 pyramidal neurons, required for synaptic KCNN2-containing channel function and long-term potentiation expression. Seems to negatively regulate SRC function in epithelial cells. In Homo sapiens (Human), this protein is MAGUK p55 subfamily member 2.